A 120-amino-acid polypeptide reads, in one-letter code: Large ribosomal subunit protein uL18 (120 aa).

This sequence belongs to the universal ribosomal protein uL18 family. In terms of assembly, part of the 50S ribosomal subunit; part of the 5S rRNA/L5/L18/L25 subcomplex. Contacts the 5S and 23S rRNAs.

Functionally, this is one of the proteins that bind and probably mediate the attachment of the 5S RNA into the large ribosomal subunit, where it forms part of the central protuberance. The polypeptide is Large ribosomal subunit protein uL18 (Treponema pallidum (strain Nichols)).